The following is a 309-amino-acid chain: Taste receptor type 2 member 31 (309 aa).

At 1–2 (MI) the chain is on the extracellular side. Residues 3 to 23 (TFLPTIFSILVVVIFVIGNFG) traverse the membrane as a helical segment. The Cytoplasmic portion of the chain corresponds to 24 to 55 (NGFIALVNSIEWVKRQKISFADQILTALAVSR). A helical membrane pass occupies residues 56-76 (VGLLWALLLNWYSTVFNPAFY). At 77–100 (SVGVRTTVYDVWTVTGHFSNWLAT) the chain is on the extracellular side. A helical membrane pass occupies residues 101 to 121 (SLSIFYLLKIANFSNLIFLHL). Residues 122-126 (KRRVK) lie on the Cytoplasmic side of the membrane. Residues 127–147 (SVILVMLLGPLLFLACQLFVI) traverse the membrane as a helical segment. Residues 148 to 181 (NMKEILRTKEYEGNMTWKIKLRSAMYLSDATITT) are Extracellular-facing. The N-linked (GlcNAc...) asparagine glycan is linked to asparagine 161. The chain crosses the membrane as a helical span at residues 182 to 202 (LANLVPFTLTLLSFLLLICSL). Residues 203-229 (CKHLNKMQLHGKGSQDPSTKVHIKVLQ) lie on the Cytoplasmic side of the membrane. Residues 230–250 (TVISFLLLCAIYFLSIMISVW) form a helical membrane-spanning segment. Residues 251–259 (SFGSLENKP) lie on the Extracellular side of the membrane. The chain crosses the membrane as a helical span at residues 260–280 (VFMFCKAIRFSYPSIHPFILI). Residues 281-309 (WGNKKLKQTFLSVLRQVRYWVKGEKPSSP) lie on the Cytoplasmic side of the membrane.

It belongs to the G-protein coupled receptor T2R family.

The protein localises to the membrane. Functionally, receptor that may play a role in the perception of bitterness and is gustducin-linked. May play a role in sensing the chemical composition of the gastrointestinal content. The activity of this receptor may stimulate alpha gustducin, mediate PLC-beta-2 activation and lead to the gating of TRPM5. This is Taste receptor type 2 member 31 (TAS2R31) from Pongo pygmaeus (Bornean orangutan).